The primary structure comprises 336 residues: tRNA N6-adenosine threonylcarbamoyltransferase (336 aa).

Fe cation contacts are provided by histidine 111 and histidine 115. Substrate-binding positions include 134 to 138, aspartate 167, glycine 180, and asparagine 271; that span reads LVSGG. Fe cation is bound at residue aspartate 299.

It belongs to the KAE1 / TsaD family. It depends on Fe(2+) as a cofactor.

The protein resides in the cytoplasm. The enzyme catalyses L-threonylcarbamoyladenylate + adenosine(37) in tRNA = N(6)-L-threonylcarbamoyladenosine(37) in tRNA + AMP + H(+). In terms of biological role, required for the formation of a threonylcarbamoyl group on adenosine at position 37 (t(6)A37) in tRNAs that read codons beginning with adenine. Is involved in the transfer of the threonylcarbamoyl moiety of threonylcarbamoyl-AMP (TC-AMP) to the N6 group of A37, together with TsaE and TsaB. TsaD likely plays a direct catalytic role in this reaction. The protein is tRNA N6-adenosine threonylcarbamoyltransferase of Thioalkalivibrio sulfidiphilus (strain HL-EbGR7).